The sequence spans 284 residues: MSRPDQAARRRAIAAELHVSPTFDARDEAERRIGFVADYLRTAGLRACVLGISGGIDSSTAGRLAQLAVERLRASGYDARFVAMRLPYGAQHDEADARRALAFVRADETLTVDVKPAADAMLAALAAGGLAYLDHAQQDFVLGNIKARERMIAQYAVAGARNGVVIGTDHAAESVMGFFTKFGDGGADVLPLAGLTKRRVRALARMLGADEPLVLKTPTADLETLRPQRPDEHAYGITYEQIDDFLEGKPMDDAVAETVLRFYDATRHKRALPYTMFDWPGHPA.

ATP is bound at residue 51–58 (GISGGIDS). Aspartate 57 serves as a coordination point for Mg(2+). Arginine 148 contacts deamido-NAD(+). Threonine 168 contacts ATP. Glutamate 173 is a binding site for Mg(2+). 2 residues coordinate deamido-NAD(+): lysine 181 and aspartate 188. 2 residues coordinate ATP: lysine 197 and threonine 219. 268–269 (HK) lines the deamido-NAD(+) pocket.

The protein belongs to the NAD synthetase family. Homodimer.

It carries out the reaction deamido-NAD(+) + NH4(+) + ATP = AMP + diphosphate + NAD(+) + H(+). It participates in cofactor biosynthesis; NAD(+) biosynthesis; NAD(+) from deamido-NAD(+) (ammonia route): step 1/1. Catalyzes the ATP-dependent amidation of deamido-NAD to form NAD. Uses ammonia as a nitrogen source. The sequence is that of NH(3)-dependent NAD(+) synthetase from Burkholderia pseudomallei (strain 1106a).